Here is an 876-residue protein sequence, read N- to C-terminus: Leucine--tRNA ligase (876 aa).

Positions 43 to 53 match the 'HIGH' region motif; that stretch reads PYPSGRIHIGH. Positions 632–636 match the 'KMSKS' region motif; sequence KMSKS. Position 635 (Lys635) interacts with ATP.

Belongs to the class-I aminoacyl-tRNA synthetase family.

The protein localises to the cytoplasm. The enzyme catalyses tRNA(Leu) + L-leucine + ATP = L-leucyl-tRNA(Leu) + AMP + diphosphate. This is Leucine--tRNA ligase from Allorhizobium ampelinum (strain ATCC BAA-846 / DSM 112012 / S4) (Agrobacterium vitis (strain S4)).